Reading from the N-terminus, the 228-residue chain is Max-interacting protein 1 (228 aa).

2 disordered regions span residues 30–76 (YASS…NELE) and 160–228 (SIGS…SFAS). Positions 43–56 (QHSKPPRRLSRAQK) are enriched in basic residues. The span at 57–70 (HSSGSSNTSTANRS) shows a compositional bias: polar residues. Residues 67–119 (ANRSTHNELEKNRRAHLRLCLERLKVLIPLGPDCTRHTTLGLLNKAKAHIKKL) form the bHLH domain. The segment covering 173 to 183 (EREEIEVDVES) has biased composition (acidic residues). Over residues 207–228 (SLQSVGSDEGYSSASVKLSFAS) the composition is skewed to polar residues.

In terms of assembly, efficient DNA binding requires dimerization with another bHLH protein. Binds DNA as a heterodimer with MAX. Interacts with SMC3. Interacts with RNF17.

The protein localises to the nucleus. Functionally, transcriptional repressor. MXI1 binds with MAX to form a sequence-specific DNA-binding protein complex which recognizes the core sequence 5'-CAC[GA]TG-3'. MXI1 thus antagonizes MYC transcriptional activity by competing for MAX. Isoform Short, which lacks a segment, has a much stronger suppressive potential and associates with a SIN3 homologous protein. The protein is Max-interacting protein 1 (Mxi1) of Mus musculus (Mouse).